The chain runs to 132 residues: Sec-independent protein translocase protein TatB (132 aa).

The helical transmembrane segment at 1-21 (MFDIGFWELVLISVVGLVVLG) threads the bilayer. The interval 70 to 132 (GMEDLSPELK…KVSAADKKAE (63 aa)) is disordered. Basic and acidic residues-rich tracts occupy residues 96–108 (YADK…ETAK) and 115–132 (SAEK…KKAE).

Belongs to the TatB family. In terms of assembly, the Tat system comprises two distinct complexes: a TatABC complex, containing multiple copies of TatA, TatB and TatC subunits, and a separate TatA complex, containing only TatA subunits. Substrates initially bind to the TatABC complex, which probably triggers association of the separate TatA complex to form the active translocon.

The protein resides in the cell inner membrane. Part of the twin-arginine translocation (Tat) system that transports large folded proteins containing a characteristic twin-arginine motif in their signal peptide across membranes. Together with TatC, TatB is part of a receptor directly interacting with Tat signal peptides. TatB may form an oligomeric binding site that transiently accommodates folded Tat precursor proteins before their translocation. The polypeptide is Sec-independent protein translocase protein TatB (Vibrio parahaemolyticus serotype O3:K6 (strain RIMD 2210633)).